The following is a 446-amino-acid chain: Probable glycine dehydrogenase (decarboxylating) subunit 1 (446 aa).

It belongs to the GcvP family. N-terminal subunit subfamily. In terms of assembly, the glycine cleavage system is composed of four proteins: P, T, L and H. In this organism, the P 'protein' is a heterodimer of two subunits.

The catalysed reaction is N(6)-[(R)-lipoyl]-L-lysyl-[glycine-cleavage complex H protein] + glycine + H(+) = N(6)-[(R)-S(8)-aminomethyldihydrolipoyl]-L-lysyl-[glycine-cleavage complex H protein] + CO2. In terms of biological role, the glycine cleavage system catalyzes the degradation of glycine. The P protein binds the alpha-amino group of glycine through its pyridoxal phosphate cofactor; CO(2) is released and the remaining methylamine moiety is then transferred to the lipoamide cofactor of the H protein. In Thermococcus onnurineus (strain NA1), this protein is Probable glycine dehydrogenase (decarboxylating) subunit 1.